We begin with the raw amino-acid sequence, 731 residues long: Autophagy-related protein 20 (731 aa).

Residues 1-22 (MSSVLRNQDNPPTISEVSSTTK) are compositionally biased toward polar residues. The tract at residues 1-130 (MSSVLRNQDN…NNKSNNVSRV (130 aa)) is disordered. Residues 31 to 41 (KQEEKEKEKEI) show a composition bias toward basic and acidic residues. Positions 69 to 82 (SFMTANSFNEGPNT) are enriched in polar residues. Low complexity-rich tracts occupy residues 92–102 (NNNSSSNNNRG) and 113–128 (LLLYNTSNNNKSNNVS). Positions 164–340 (IQITEAGNSN…KFLDPNANWG (177 aa)) constitute a PX domain. A 1,2-diacyl-sn-glycero-3-phospho-(1D-myo-inositol-3-phosphate) contacts are provided by arginine 205, serine 207, and lysine 231. The tract at residues 253-277 (SVAGSNGNSGGSGGGGASGGAGSGS) is disordered. Residues 259–277 (GNSGGSGGGGASGGAGSGS) show a composition bias toward gly residues. Residue arginine 306 participates in a 1,2-diacyl-sn-glycero-3-phospho-(1D-myo-inositol-3-phosphate) binding. A disordered region spans residues 586-626 (NSQVKPKNGKYNLEQQQSSTVSPAPPPGPPPSSSSSSSSSS). Over residues 608-617 (PAPPPGPPPS) the composition is skewed to pro residues.

The protein belongs to the sorting nexin family.

The protein localises to the endosome membrane. It is found in the preautophagosomal structure membrane. Its function is as follows. Required for cytoplasm to vacuole transport (Cvt), pexophagy and mitophagy. Also involved in endoplasmic reticulum-specific autophagic process and is essential for the survival of cells subjected to severe ER stress. Functions in protein retrieval from the endocytic pathway. The polypeptide is Autophagy-related protein 20 (ATG20) (Candida albicans (strain SC5314 / ATCC MYA-2876) (Yeast)).